We begin with the raw amino-acid sequence, 390 residues long: tRNA(Met) cytidine acetate ligase (390 aa).

ATP-binding positions include 7–20 (ITEY…HIYH), Gly-101, Asn-152, and Arg-177.

It belongs to the TmcAL family.

The protein localises to the cytoplasm. The enzyme catalyses cytidine(34) in elongator tRNA(Met) + acetate + ATP = N(4)-acetylcytidine(34) in elongator tRNA(Met) + AMP + diphosphate. Catalyzes the formation of N(4)-acetylcytidine (ac(4)C) at the wobble position of elongator tRNA(Met), using acetate and ATP as substrates. First activates an acetate ion to form acetyladenylate (Ac-AMP) and then transfers the acetyl group to tRNA to form ac(4)C34. This chain is tRNA(Met) cytidine acetate ligase, found in Leuconostoc mesenteroides subsp. mesenteroides (strain ATCC 8293 / DSM 20343 / BCRC 11652 / CCM 1803 / JCM 6124 / NCDO 523 / NBRC 100496 / NCIMB 8023 / NCTC 12954 / NRRL B-1118 / 37Y).